The primary structure comprises 362 residues: Variable large protein 25 (362 aa).

An N-terminal signal peptide occupies residues 1 to 26 (MRKRISAIINKLNISIMMMIVVLMIG). C27 carries the N-palmitoyl cysteine lipid modification. C27 carries S-diacylglycerol cysteine lipidation.

It belongs to the variable large protein (Vlp) family. Alpha subfamily.

The protein localises to the cell outer membrane. In terms of biological role, the Vlp and Vsp proteins are antigenically distinct proteins, only one vlp or vsp gene is transcriptionally active at any one time. Switching between these genes is a mechanism of host immune response evasion. The chain is Variable large protein 25 from Borrelia hermsii.